We begin with the raw amino-acid sequence, 593 residues long: MRVSRLMLVTLRDVPAEAEITSHQLLLRGGFIRRVGSGIYAYLPMMWKVLQRITTIIREEMNRAGALETLLPQLHPSELWQRSGRWQGYTAGEGIMFHLEDRQGRELGLGPTHEEVITSLAGELLRSYRQLPVNLYQVQTKFRDEIRPRFGLMRGREFIMKDAYSFHADEADLQATYAVMDQAYRRIFERCGLEAVPVDADSGAIGGAASQEFMVTAEAGEDLILISDDGAYAANQEKAVSIPDAVASLPPAALTLLKTPGQTTIEGLCTAQAWQPGQLVKVLLLLAQLEDGQQQPVLVSLRGDQDLNEVKLVNAVSRRSEQGVLDCRPISPDDLQRQGINTIPFGFIGPDLADKVLADASSWTTSFLRLADTTATELEQFHCGANAEDQHRSHCSWGDLGGAPQGEDLRKARAGERCVHNPDARLQEKRGIEVGHIFQLGRKYSQALDCCFTNENGRDEPFWMGCYGIGVSRLAQAAVEQHHDDGGIRWPAAIAPYEVIVVIANNHDDAQTDLGDTVYATLLEAGIDVLLDDRKERAGVKFKDADLIGIPWRLVIGRDAAEGTVELVQRSNREMRKLPHGEAIGELLKALRP.

The protein belongs to the class-II aminoacyl-tRNA synthetase family. ProS type 1 subfamily. In terms of assembly, homodimer.

It is found in the cytoplasm. It carries out the reaction tRNA(Pro) + L-proline + ATP = L-prolyl-tRNA(Pro) + AMP + diphosphate. In terms of biological role, catalyzes the attachment of proline to tRNA(Pro) in a two-step reaction: proline is first activated by ATP to form Pro-AMP and then transferred to the acceptor end of tRNA(Pro). As ProRS can inadvertently accommodate and process non-cognate amino acids such as alanine and cysteine, to avoid such errors it has two additional distinct editing activities against alanine. One activity is designated as 'pretransfer' editing and involves the tRNA(Pro)-independent hydrolysis of activated Ala-AMP. The other activity is designated 'posttransfer' editing and involves deacylation of mischarged Ala-tRNA(Pro). The misacylated Cys-tRNA(Pro) is not edited by ProRS. In Parasynechococcus marenigrum (strain WH8102), this protein is Proline--tRNA ligase.